Consider the following 226-residue polypeptide: N-acetyltransferase family 8 member 3 (226 aa).

Transmembrane regions (helical) follow at residues 36–56 (MLLL…LFLA) and 58–78 (GSWL…WFLA). Positions 61 to 220 (LLVLLSILTL…PMINLKYSLT (160 aa)) constitute an N-acetyltransferase domain.

The protein belongs to the camello family.

It is found in the nucleus membrane. It localises to the cytoplasm. Its subcellular location is the perinuclear region. It carries out the reaction L-lysyl-[protein] + acetyl-CoA = N(6)-acetyl-L-lysyl-[protein] + CoA + H(+). In terms of biological role, has histone acetyltransferase activity in vitro, with specificity for histone H4. The polypeptide is N-acetyltransferase family 8 member 3 (Mus musculus (Mouse)).